A 451-amino-acid chain; its full sequence is Adenylosuccinate synthetase isozyme 2 (451 aa).

GTP is bound by residues 34–40 (GDEGKGK) and 62–64 (GHT). Asp-35 serves as the catalytic Proton acceptor. Residues Asp-35 and Gly-62 each coordinate Mg(2+). Asp-35 lines the substrate pocket. IMP-binding positions include 35–38 (DEGK), 60–63 (NAGH), Thr-157, Arg-171, Asn-250, Thr-265, and Arg-329. His-63 functions as the Proton donor in the catalytic mechanism. Residue 325 to 331 (VTTGRKR) coordinates substrate. Residues Arg-331, 357–359 (KLD), and 439–442 (GVGK) contribute to the GTP site.

It belongs to the adenylosuccinate synthetase family. Homodimer. The cofactor is Mg(2+).

It localises to the cytoplasm. The protein resides in the mitochondrion. It catalyses the reaction IMP + L-aspartate + GTP = N(6)-(1,2-dicarboxyethyl)-AMP + GDP + phosphate + 2 H(+). It functions in the pathway purine metabolism; AMP biosynthesis via de novo pathway; AMP from IMP: step 1/2. Inhibited competitively by AMP and IMP and non-competitively by fructose 1,6-bisphosphate. In terms of biological role, plays an important role in the de novo pathway and in the salvage pathway of purine nucleotide biosynthesis. Catalyzes the first committed step in the biosynthesis of AMP from IMP. The protein is Adenylosuccinate synthetase isozyme 2 of Gallus gallus (Chicken).